The following is a 467-amino-acid chain: MTSPKPIRTRFAPSPTGFLHLGGARTALFSWAFARHHKGVFVLRIEDTDVERSTDAAVQAILDSMDWLGMQPDEGPFYQMKRLDRYSEVLQSMLAAGTAYHCYSSPEEVEAMREAARARGDKPRYDGTWRPEPGKTLPAIPEGRKPVIRFKNPQDGVTAWDDMVKGPVSFDNNELDDLIIARPDGTPTYNFCVVVDDWDMGMTHVIRGDDHVNNTPRQINILKALGADVPQYGHVPMILGPDGQKLSKRHGAVNVMEYDDQGYLPEAMVNYLARLGWSHGDAELFSREEFVRWFDTHHLSKSPSQWDPKKLNWVNAHYIKAMDNAELAQRVAPRIAKRGGDASRADLADIMGLFKDRAETLEQLADDAMLFCAPFQAAPQELATQHLTPAAREALAGFAAAAAGTEWTREAISALIKAQLAERGLKMPQLAIPLRVAVTGRAQTPAVDAVLVLLGKDVVLERLKALL.

A 'HIGH' region motif is present at residues 13–23; sequence PSPTGFLHLGG. The span at 118 to 133 shows a compositional bias: basic and acidic residues; the sequence is ARGDKPRYDGTWRPEP. Residues 118–141 form a disordered region; sequence ARGDKPRYDGTWRPEPGKTLPAIP. Positions 245-249 match the 'KMSKS' region motif; it reads KLSKR. Position 248 (Lys248) interacts with ATP.

The protein belongs to the class-I aminoacyl-tRNA synthetase family. Glutamate--tRNA ligase type 1 subfamily. As to quaternary structure, monomer.

Its subcellular location is the cytoplasm. The catalysed reaction is tRNA(Glu) + L-glutamate + ATP = L-glutamyl-tRNA(Glu) + AMP + diphosphate. Its function is as follows. Catalyzes the attachment of glutamate to tRNA(Glu) in a two-step reaction: glutamate is first activated by ATP to form Glu-AMP and then transferred to the acceptor end of tRNA(Glu). The sequence is that of Glutamate--tRNA ligase from Bordetella avium (strain 197N).